The sequence spans 612 residues: MPKLRSATSTQGRNMAGARALWRATGMKENDFGKPIIAVVNSFTQFVPGHVHLKDMGQLVAAEIEKAGGVAKEFNTIAVDDGIAMGHGGMLYSLPSRDLIADSVEYMVNAHCADAMVCISNCDKITPGMLMAAMRLNIPTIFVSGGPMEAGKTKLSDQLIRLDLVDAMIEAADPNVSDERIDAIERSACPTCGSCSGMFTANSMNCLTEALGLSLPGNGSMLATHADRKELFLKAGRQIVELCKRYYEQDDASVLPRSIGTFDAFENAMSLDIAMGGSSNTVLHLLAAAQEAGVDFKMEDIDRLSRKVPCLSKIAPNTNKYHMEDVHRAGGIMGLLGELDRAGLIHKNTHTVLGMSMGEQLDQYDIIRNQDEELHKFFRAGPAGIRTTQAFSQDCRWDTVDNDRVNGCIRNKENAISQEGGLAVLFGNLAEDGCIVKTAGVDESIWKFTGTAIVFESQEDAVAGILGGKVKEGHVVVIRYEGPKGGPGMQEMLYPTSYLKSMGLGKKCALLTDGRFSGGTSGLSIGHASPEAASGGAIGLVRDGDIINIDIPNRAINLEISNDELAARRAEQDQKGWQPANREREVSFALKVFGHFATSADKGAVRDKTLLK.

A Mg(2+)-binding site is contributed by D81. C122 contacts [2Fe-2S] cluster. Mg(2+)-binding residues include D123 and K124. K124 is modified (N6-carboxylysine). C195 is a binding site for [2Fe-2S] cluster. Residue E491 coordinates Mg(2+). S517 serves as the catalytic Proton acceptor.

Belongs to the IlvD/Edd family. Homodimer. The cofactor is [2Fe-2S] cluster. It depends on Mg(2+) as a cofactor.

The catalysed reaction is (2R)-2,3-dihydroxy-3-methylbutanoate = 3-methyl-2-oxobutanoate + H2O. The enzyme catalyses (2R,3R)-2,3-dihydroxy-3-methylpentanoate = (S)-3-methyl-2-oxopentanoate + H2O. It functions in the pathway amino-acid biosynthesis; L-isoleucine biosynthesis; L-isoleucine from 2-oxobutanoate: step 3/4. Its pathway is amino-acid biosynthesis; L-valine biosynthesis; L-valine from pyruvate: step 3/4. Functionally, functions in the biosynthesis of branched-chain amino acids. Catalyzes the dehydration of (2R,3R)-2,3-dihydroxy-3-methylpentanoate (2,3-dihydroxy-3-methylvalerate) into 2-oxo-3-methylpentanoate (2-oxo-3-methylvalerate) and of (2R)-2,3-dihydroxy-3-methylbutanoate (2,3-dihydroxyisovalerate) into 2-oxo-3-methylbutanoate (2-oxoisovalerate), the penultimate precursor to L-isoleucine and L-valine, respectively. This is Dihydroxy-acid dehydratase from Haemophilus influenzae (strain 86-028NP).